Consider the following 662-residue polypeptide: Bifunctional polymyxin resistance protein ArnA (662 aa).

The tract at residues 1-307 is formyltransferase ArnAFT; sequence MTSKAVVFAY…ELGLVEGARL (307 aa). His-106 serves as the catalytic Proton donor; for formyltransferase activity. (6R)-10-formyltetrahydrofolate-binding positions include Arg-116 and 138–142; that span reads VERAD. The interval 316-662 is dehydrogenase ArnADH; that stretch reads RRTRVLILGV…EALREREAQA (347 aa). Residues Asp-349 and 370-371 each bind NAD(+); that span reads DI. Residues Ala-395, Tyr-400, and 434–435 each bind UDP-alpha-D-glucuronate; that span reads TS. The active-site Proton acceptor; for decarboxylase activity is Glu-436. UDP-alpha-D-glucuronate contacts are provided by residues Arg-462, Asn-493, 527–536, and Tyr-614; that span reads RLVDGGAQKR. Arg-620 functions as the Proton donor; for decarboxylase activity in the catalytic mechanism.

This sequence in the N-terminal section; belongs to the Fmt family. UDP-L-Ara4N formyltransferase subfamily. It in the C-terminal section; belongs to the NAD(P)-dependent epimerase/dehydratase family. UDP-glucuronic acid decarboxylase subfamily. In terms of assembly, homohexamer, formed by a dimer of trimers.

The enzyme catalyses UDP-alpha-D-glucuronate + NAD(+) = UDP-beta-L-threo-pentopyranos-4-ulose + CO2 + NADH. The catalysed reaction is UDP-4-amino-4-deoxy-beta-L-arabinose + (6R)-10-formyltetrahydrofolate = UDP-4-deoxy-4-formamido-beta-L-arabinose + (6S)-5,6,7,8-tetrahydrofolate + H(+). It functions in the pathway nucleotide-sugar biosynthesis; UDP-4-deoxy-4-formamido-beta-L-arabinose biosynthesis; UDP-4-deoxy-4-formamido-beta-L-arabinose from UDP-alpha-D-glucuronate: step 1/3. The protein operates within nucleotide-sugar biosynthesis; UDP-4-deoxy-4-formamido-beta-L-arabinose biosynthesis; UDP-4-deoxy-4-formamido-beta-L-arabinose from UDP-alpha-D-glucuronate: step 3/3. Its pathway is bacterial outer membrane biogenesis; lipopolysaccharide biosynthesis. Functionally, bifunctional enzyme that catalyzes the oxidative decarboxylation of UDP-glucuronic acid (UDP-GlcUA) to UDP-4-keto-arabinose (UDP-Ara4O) and the addition of a formyl group to UDP-4-amino-4-deoxy-L-arabinose (UDP-L-Ara4N) to form UDP-L-4-formamido-arabinose (UDP-L-Ara4FN). The modified arabinose is attached to lipid A and is required for resistance to polymyxin and cationic antimicrobial peptides. The polypeptide is Bifunctional polymyxin resistance protein ArnA (Pseudomonas paraeruginosa (strain DSM 24068 / PA7) (Pseudomonas aeruginosa (strain PA7))).